Here is a 142-residue protein sequence, read N- to C-terminus: Hemoglobin subunit epsilon (142 aa).

A Globin domain is found at 3–142; sequence HFTAEEKAAI…KLVSAVAIAL (140 aa). Phosphoserine is present on residues Ser14 and Ser51. His64 and His93 together coordinate heme b.

Belongs to the globin family. As to quaternary structure, heterotetramer of two alpha chains and two epsilon chains in early embryonic hemoglobin Gower-2; two zeta chains and two epsilon chains in early embryonic hemoglobin Gower-1. In terms of tissue distribution, red blood cells.

Functionally, the epsilon chain is a beta-type chain of early mammalian embryonic hemoglobin. The sequence is that of Hemoglobin subunit epsilon (HBE1) from Callithrix geoffroyi (Geoffroy's marmoset).